The chain runs to 121 residues: Small ribosomal subunit protein bS6m (121 aa).

The protein belongs to the bacterial ribosomal protein bS6 family. Component of the mitochondrial ribosome small subunit (28S) which comprises a 12S rRNA and about 30 distinct proteins.

Its subcellular location is the mitochondrion. The protein is Small ribosomal subunit protein bS6m (MRPS6) of Gallus gallus (Chicken).